Here is a 155-residue protein sequence, read N- to C-terminus: uncharacterized protein (155 aa).

It belongs to the mimivirus L6/L7/L57 family.

This is an uncharacterized protein from Acanthamoeba polyphaga (Amoeba).